The chain runs to 139 residues: Invertebrate-type lysozyme 3 (139 aa).

Positions 1–18 are cleaved as a signal peptide; that stretch reads MFVKSLVFLTIAVAYASA. An I-type lysozyme domain is found at 19 to 138; that stretch reads DCLHCICMRE…WNGIKSCCGC (120 aa). 7 disulfide bridges follow: Cys20–Cys106, Cys23–Cys138, Cys25–Cys31, Cys36–Cys45, Cys58–Cys86, Cys76–Cys82, and Cys98–Cys120. The active-site Proton donor is Glu28. Asp39 (nucleophile) is an active-site residue. 51-57 contributes to the substrate binding site; sequence KLPYYED. Substrate-binding positions include Tyr90 and 113 to 115; that span reads HNG.

Belongs to the glycosyl hydrolase 22 family. Type-I lysozyme subfamily. Expressed in pharynx grinder muscle pm7, isthmus marginal cell mc2 and pharyngeal muscle cell pm5, intestinal cells and at lower levels in coelomocytes and epidermis. Expressed at low levels in intestine.

It is found in the late endosome lumen. It localises to the recycling endosome lumen. Its subcellular location is the lysosome lumen. The protein resides in the secreted. The catalysed reaction is Hydrolysis of (1-&gt;4)-beta-linkages between N-acetylmuramic acid and N-acetyl-D-glucosamine residues in a peptidoglycan and between N-acetyl-D-glucosamine residues in chitodextrins.. Functionally, has bacteriolytic activity against Gram-positive bacteria. Plays a role in defense against bacterial pathogens. Involved in pharyngeal grinder function by enabling proper lysis of ingested bacteria. This Caenorhabditis elegans protein is Invertebrate-type lysozyme 3.